Consider the following 1160-residue polypeptide: DNA polymerase III subunit alpha (1160 aa).

The protein belongs to the DNA polymerase type-C family. DnaE subfamily. As to quaternary structure, the DNA polymerase holoenzyme is a complex that contains 10 different types of subunits. These subunits are organized into 3 functionally essential subassemblies: the pol III core, the beta sliding clamp processivity factor and the clamp-loading complex. The pol III core (subunits alpha,epsilon and theta) contains the polymerase and the 3'-5' exonuclease proofreading activities. The polymerase is tethered to the template via the sliding clamp processivity factor. The clamp-loading complex assembles the beta processivity factor onto the primer template and plays a central role in the organization and communication at the replication fork. This complex contains delta, delta', psi and chi, and copies of either or both of two different DnaX proteins, gamma and tau. The composition of the holoenzyme is, therefore: (alpha,epsilon,theta)[2]-(gamma/tau)[3]-delta,delta', psi,chi-beta[4].

It is found in the cytoplasm. It carries out the reaction DNA(n) + a 2'-deoxyribonucleoside 5'-triphosphate = DNA(n+1) + diphosphate. Its function is as follows. DNA polymerase III is a complex, multichain enzyme responsible for most of the replicative synthesis in bacteria. This DNA polymerase also exhibits 3' to 5' exonuclease activity. The alpha chain is the DNA polymerase. The sequence is that of DNA polymerase III subunit alpha (dnaE) from Escherichia coli O157:H7.